Here is a 153-residue protein sequence, read N- to C-terminus: Deoxyuridine 5'-triphosphate nucleotidohydrolase (153 aa).

Residues 65–67 (RSG), asparagine 78, and 82–84 (TID) contribute to the substrate site. A disordered region spans residues 132-153 (MTQRGEGGFGHTGISAVHPRTH).

The protein belongs to the dUTPase family. Requires Mg(2+) as cofactor.

The enzyme catalyses dUTP + H2O = dUMP + diphosphate + H(+). It participates in pyrimidine metabolism; dUMP biosynthesis; dUMP from dCTP (dUTP route): step 2/2. This enzyme is involved in nucleotide metabolism: it produces dUMP, the immediate precursor of thymidine nucleotides and it decreases the intracellular concentration of dUTP so that uracil cannot be incorporated into DNA. This Chlorobium limicola (strain DSM 245 / NBRC 103803 / 6330) protein is Deoxyuridine 5'-triphosphate nucleotidohydrolase.